We begin with the raw amino-acid sequence, 1216 residues long: ATP-dependent helicase/nuclease subunit A (1216 aa).

Residues 26–488 (QKKTAEQIEA…ILLKENFRSS (463 aa)) enclose the UvrD-like helicase ATP-binding domain. 47–54 (ASAGSGKT) provides a ligand contact to ATP. One can recognise a UvrD-like helicase C-terminal domain in the interval 515–802 (KHQLVFANTK…ELMTIHKSKG (288 aa)).

It belongs to the helicase family. AddA subfamily. In terms of assembly, heterodimer of AddA and AddB/RexB. Mg(2+) serves as cofactor.

It catalyses the reaction Couples ATP hydrolysis with the unwinding of duplex DNA by translocating in the 3'-5' direction.. The catalysed reaction is ATP + H2O = ADP + phosphate + H(+). The heterodimer acts as both an ATP-dependent DNA helicase and an ATP-dependent, dual-direction single-stranded exonuclease. Recognizes the chi site generating a DNA molecule suitable for the initiation of homologous recombination. The AddA nuclease domain is required for chi fragment generation; this subunit has the helicase and 3' -&gt; 5' nuclease activities. This is ATP-dependent helicase/nuclease subunit A from Streptococcus pneumoniae (strain CGSP14).